The primary structure comprises 404 residues: Propionate kinase PduW (404 aa).

Belongs to the acetokinase family. PduW subfamily.

The protein resides in the cytoplasm. It catalyses the reaction propanoate + ATP = propanoyl phosphate + ADP. It participates in polyol metabolism; 1,2-propanediol degradation. The protein operates within organic acid metabolism; propanoate degradation. In terms of biological role, works with phosphate acetyltransferase (pta) to capture exogenous propionate and regenerate propionyl-CoA during degradation of propionate and 1,2-propanediol (1,2-PD). Ectopic expression partially complements a cobB deletion allowing some growth on propionate. Restores growth to an eutQ deletion on ethanolamine and tetrathionate under anoxic conditions. The sequence is that of Propionate kinase PduW from Salmonella typhimurium (strain LT2 / SGSC1412 / ATCC 700720).